The chain runs to 776 residues: Endonuclease MutS2 (776 aa).

Position 330-337 (330-337 (GPNTGGKT)) interacts with ATP. A Smr domain is found at 701-776 (LDLRGMRYEE…GSGATIAILK (76 aa)).

Belongs to the DNA mismatch repair MutS family. MutS2 subfamily. Homodimer. Binds to stalled ribosomes, contacting rRNA.

In terms of biological role, endonuclease that is involved in the suppression of homologous recombination and thus may have a key role in the control of bacterial genetic diversity. Functionally, acts as a ribosome collision sensor, splitting the ribosome into its 2 subunits. Detects stalled/collided 70S ribosomes which it binds and splits by an ATP-hydrolysis driven conformational change. Acts upstream of the ribosome quality control system (RQC), a ribosome-associated complex that mediates the extraction of incompletely synthesized nascent chains from stalled ribosomes and their subsequent degradation. Probably generates substrates for RQC. This chain is Endonuclease MutS2, found in Lactococcus lactis subsp. lactis (strain IL1403) (Streptococcus lactis).